Consider the following 646-residue polypeptide: Zinc finger protein 493 (646 aa).

The C2H2-type 1; degenerate zinc finger occupies 26-48 (FQCDKYVKVFHKLLNSNRHNTKH). 2 consecutive C2H2-type zinc fingers follow at residues 54–76 (FKCK…KRIH) and 82–104 (YRCE…RRVH). The C2H2-type 4; degenerate zinc finger occupies 109-131 (SYKYECGKSFNQDSNLTTHKRIH). The segment at 137-159 (YKCEECGTSFYQFSYLTRHKLIH) adopts a C2H2-type 5 zinc-finger fold. The C2H2-type 6; degenerate zinc finger occupies 165–187 (YKCEQYGKTFNQSSTLTGHKIIH). The C2H2-type 7; degenerate zinc-finger motif lies at 193–215 (YKCEECGKAFSIFSTPTKHKIIH). The C2H2-type 8; degenerate zinc finger occupies 221–243 (HRCEEYCKAYKESSHLTTHKRIH). 14 consecutive C2H2-type zinc fingers follow at residues 249–271 (YKCE…KIIH), 277–299 (HRCE…KRIH), 305–327 (YKCE…KIIH), 333–355 (YKCE…RIIH), 361–383 (YKCE…KIIH), 389–411 (YKCE…KMIH), 417–439 (YKCE…KRIH), 445–467 (YKCK…KIIH), 473–495 (YKCE…KKIH), 501–523 (YKCE…KQIH), 529–551 (YKCE…KIIH), 557–579 (YKCE…KIIH), 585–607 (CKCE…KLIH), and 613–635 (YKCE…KIIH).

Its subcellular location is the nucleus. Its function is as follows. May be involved in transcriptional regulation. The polypeptide is Zinc finger protein 493 (ZNF493) (Homo sapiens (Human)).